Here is an 898-residue protein sequence, read N- to C-terminus: Probable LRR receptor-like serine/threonine-protein kinase At4g20450 (898 aa).

An N-terminal signal peptide occupies residues 1–24 (MEGIHKLIFLALIWIFLITNIVDA). Residues 25–535 (QDQQGFISLD…TGPGNNKKKL (511 aa)) lie on the Extracellular side of the membrane. N-linked (GlcNAc...) asparagine glycosylation is found at N40, N52, N98, N247, N253, N420, N443, N465, N484, and N489. LRR repeat units follow at residues 455-477 (QLQKLDLSNNNLTGKVPEFLAKM), 479-501 (LLTFINLSGNNLSGSIPQSLLNM), and 505-526 (GLITLLYNGNNLCLDPSCESET). Residues 536–556 (LVPILASAASVGIIIAVLLLV) form a helical membrane-spanning segment. The Cytoplasmic segment spans residues 557-898 (NILLLRKKKP…FGPEHIPDAR (342 aa)). A Phosphothreonine modification is found at T582. In terms of domain architecture, Protein kinase spans 591 to 864 (NNFERPLGEG…QVANELQECL (274 aa)). Residues 597–605 (LGEGGFGVV) and K619 each bind ATP. Phosphotyrosine is present on Y664. D716 acts as the Proton acceptor in catalysis. S750 is subject to Phosphoserine. T751 carries the phosphothreonine modification. Phosphotyrosine is present on Y764. Residues 864 to 898 (LLTENSRKGGRHDVDSKSSLEQSTSFGPEHIPDAR) form a disordered region. The span at 868–881 (NSRKGGRHDVDSKS) shows a compositional bias: basic and acidic residues.

This sequence belongs to the protein kinase superfamily. Ser/Thr protein kinase family.

Its subcellular location is the membrane. The catalysed reaction is L-seryl-[protein] + ATP = O-phospho-L-seryl-[protein] + ADP + H(+). The enzyme catalyses L-threonyl-[protein] + ATP = O-phospho-L-threonyl-[protein] + ADP + H(+). This chain is Probable LRR receptor-like serine/threonine-protein kinase At4g20450, found in Arabidopsis thaliana (Mouse-ear cress).